The chain runs to 311 residues: Ribosomal protein L11 methyltransferase (311 aa).

Residues Thr-162, Gly-183, Asp-205, and Asn-248 each contribute to the S-adenosyl-L-methionine site.

The protein belongs to the methyltransferase superfamily. PrmA family.

The protein resides in the cytoplasm. The catalysed reaction is L-lysyl-[protein] + 3 S-adenosyl-L-methionine = N(6),N(6),N(6)-trimethyl-L-lysyl-[protein] + 3 S-adenosyl-L-homocysteine + 3 H(+). Its function is as follows. Methylates ribosomal protein L11. The protein is Ribosomal protein L11 methyltransferase of Bacillus subtilis (strain 168).